Here is a 309-residue protein sequence, read N- to C-terminus: NADH-quinone oxidoreductase subunit C (309 aa).

The segment at 198 to 309 (LPGDEKAVPP…RTRKKKEDGE (112 aa)) is disordered. Positions 220 to 230 (TKGDAKADVPK) are enriched in basic and acidic residues. Residues 246-261 (DAAAKPVAEAAAPAAT) show a composition bias toward low complexity.

Belongs to the complex I 30 kDa subunit family. NDH-1 is composed of 14 different subunits. Subunits NuoB, C, D, E, F, and G constitute the peripheral sector of the complex.

It localises to the cell inner membrane. It catalyses the reaction a quinone + NADH + 5 H(+)(in) = a quinol + NAD(+) + 4 H(+)(out). In terms of biological role, NDH-1 shuttles electrons from NADH, via FMN and iron-sulfur (Fe-S) centers, to quinones in the respiratory chain. The immediate electron acceptor for the enzyme in this species is believed to be ubiquinone. Couples the redox reaction to proton translocation (for every two electrons transferred, four hydrogen ions are translocated across the cytoplasmic membrane), and thus conserves the redox energy in a proton gradient. The polypeptide is NADH-quinone oxidoreductase subunit C (Novosphingobium aromaticivorans (strain ATCC 700278 / DSM 12444 / CCUG 56034 / CIP 105152 / NBRC 16084 / F199)).